Here is a 261-residue protein sequence, read N- to C-terminus: Tryptophan synthase alpha chain (261 aa).

Catalysis depends on proton acceptor residues E47 and D58.

It belongs to the TrpA family. As to quaternary structure, tetramer of two alpha and two beta chains.

The enzyme catalyses (1S,2R)-1-C-(indol-3-yl)glycerol 3-phosphate + L-serine = D-glyceraldehyde 3-phosphate + L-tryptophan + H2O. The protein operates within amino-acid biosynthesis; L-tryptophan biosynthesis; L-tryptophan from chorismate: step 5/5. Functionally, the alpha subunit is responsible for the aldol cleavage of indoleglycerol phosphate to indole and glyceraldehyde 3-phosphate. This Neisseria gonorrhoeae (strain ATCC 700825 / FA 1090) protein is Tryptophan synthase alpha chain.